Consider the following 147-residue polypeptide: Large ribosomal subunit protein uL15 (147 aa).

The segment at Gly20–Gln54 is disordered. Positions Thr30–Gly44 are enriched in basic residues.

Belongs to the universal ribosomal protein uL15 family. Part of the 50S ribosomal subunit.

Its function is as follows. Binds to the 23S rRNA. The polypeptide is Large ribosomal subunit protein uL15 (Thermosipho africanus (strain TCF52B)).